We begin with the raw amino-acid sequence, 251 residues long: Triosephosphate isomerase (251 aa).

9 to 11 (NWK) serves as a coordination point for substrate. Residue histidine 95 is the Electrophile of the active site. The active-site Proton acceptor is the glutamate 167. Substrate contacts are provided by residues glycine 173, serine 212, and 233-234 (GG).

It belongs to the triosephosphate isomerase family. Homodimer.

It localises to the cytoplasm. It catalyses the reaction D-glyceraldehyde 3-phosphate = dihydroxyacetone phosphate. It functions in the pathway carbohydrate biosynthesis; gluconeogenesis. It participates in carbohydrate degradation; glycolysis; D-glyceraldehyde 3-phosphate from glycerone phosphate: step 1/1. Its function is as follows. Involved in the gluconeogenesis. Catalyzes stereospecifically the conversion of dihydroxyacetone phosphate (DHAP) to D-glyceraldehyde-3-phosphate (G3P). This is Triosephosphate isomerase from Pseudomonas aeruginosa (strain LESB58).